A 392-amino-acid chain; its full sequence is MIGTPLKKSATRVMLLGSGELGKEVVLEAQRLGVEVIAVDRYADAPAMQVAHRAHVVNMLDRVELGRIVARERPHLIVPEIEAIDTPYLLELEQEGYTVIPTARAANLTMNREGIRRLAAEELGLPTAAYRFAASIESFRAAVKDIGLPCVVKPIMSSSGKGQSVVKSMEEIDGAWTYAMEGGRGASDTVIVEEFIPFDYEITLLTVRHAGGTTFCPPIGHVQIKGDYHESWQPMAMTPAALAESQRQAKAVTDALGGSGIFGVELFIKGDRVWFSEVSPRPHDTGMVTMISQNLSEFELHVRAILGLPVPEVANLAPAASHVVLASEAAEEVTFSGLDAALSVPETKLRLFGKPDTRPGRRMGVALSFGADTDEARNRAEQAAHAVKIVTL.

Residues 20–21 (EL) and E80 each bind N(1)-(5-phospho-beta-D-ribosyl)glycinamide. ATP is bound by residues R112, K153, 158 to 163 (SSGKGQ), 193 to 196 (EEFI), and E201. The ATP-grasp domain maps to 117–306 (RLAAEELGLP…EFELHVRAIL (190 aa)). Residues E265 and E277 each coordinate Mg(2+). N(1)-(5-phospho-beta-D-ribosyl)glycinamide-binding positions include D284, K354, and 361 to 362 (RR).

Belongs to the PurK/PurT family. In terms of assembly, homodimer.

It carries out the reaction N(1)-(5-phospho-beta-D-ribosyl)glycinamide + formate + ATP = N(2)-formyl-N(1)-(5-phospho-beta-D-ribosyl)glycinamide + ADP + phosphate + H(+). The protein operates within purine metabolism; IMP biosynthesis via de novo pathway; N(2)-formyl-N(1)-(5-phospho-D-ribosyl)glycinamide from N(1)-(5-phospho-D-ribosyl)glycinamide (formate route): step 1/1. Involved in the de novo purine biosynthesis. Catalyzes the transfer of formate to 5-phospho-ribosyl-glycinamide (GAR), producing 5-phospho-ribosyl-N-formylglycinamide (FGAR). Formate is provided by PurU via hydrolysis of 10-formyl-tetrahydrofolate. The protein is Formate-dependent phosphoribosylglycinamide formyltransferase of Geobacter metallireducens (strain ATCC 53774 / DSM 7210 / GS-15).